The primary structure comprises 189 residues: Peptidyl-tRNA hydrolase (189 aa).

Tyrosine 14 is a tRNA binding site. The active-site Proton acceptor is histidine 19. Residues tyrosine 64, asparagine 66, and asparagine 112 each coordinate tRNA.

The protein belongs to the PTH family. In terms of assembly, monomer.

It is found in the cytoplasm. The catalysed reaction is an N-acyl-L-alpha-aminoacyl-tRNA + H2O = an N-acyl-L-amino acid + a tRNA + H(+). Hydrolyzes ribosome-free peptidyl-tRNAs (with 1 or more amino acids incorporated), which drop off the ribosome during protein synthesis, or as a result of ribosome stalling. In terms of biological role, catalyzes the release of premature peptidyl moieties from peptidyl-tRNA molecules trapped in stalled 50S ribosomal subunits, and thus maintains levels of free tRNAs and 50S ribosomes. The polypeptide is Peptidyl-tRNA hydrolase (Dehalococcoides mccartyi (strain ATCC BAA-2100 / JCM 16839 / KCTC 5957 / BAV1)).